The chain runs to 333 residues: GTPase Obg (333 aa).

The Obg domain maps to 1 to 159 (MKFIDQTIIQ…RDIQLELILI (159 aa)). The OBG-type G domain occupies 160-332 (ADVGTLGMPN…LCSDIAFYLQ (173 aa)). GTP contacts are provided by residues 166–173 (GMPNAGKS), 191–195 (FTTLN), 212–215 (DIPG), 282–285 (NKID), and 313–315 (SSI). The Mg(2+) site is built by S173 and T193.

It belongs to the TRAFAC class OBG-HflX-like GTPase superfamily. OBG GTPase family. As to quaternary structure, monomer. Mg(2+) serves as cofactor.

It localises to the cytoplasm. Its function is as follows. An essential GTPase which binds GTP, GDP and possibly (p)ppGpp with moderate affinity, with high nucleotide exchange rates and a fairly low GTP hydrolysis rate. Plays a role in control of the cell cycle, stress response, ribosome biogenesis and in those bacteria that undergo differentiation, in morphogenesis control. The chain is GTPase Obg from Buchnera aphidicola subsp. Schizaphis graminum (strain Sg).